The chain runs to 307 residues: F-box protein At5g03100 (307 aa).

The region spanning 8 to 54 is the F-box domain; it reads VDFISSLPDEILHHILANTPTKLAIRTSVLSKRWKHVWYETPSISIV.

This is F-box protein At5g03100 from Arabidopsis thaliana (Mouse-ear cress).